A 524-amino-acid polypeptide reads, in one-letter code: Probable 1,3-beta-glucanosyltransferase GAS3 (524 aa).

Positions 1 to 21 (MQLSKSILLAALAATPSLVNA) are cleaved as a signal peptide. A disulfide bridge links C78 with C107. The (1,3-beta-D-glucosyl)n site is built by Y96, N168, and E169. Catalysis depends on E169, which acts as the Proton donor. The N-linked (GlcNAc...) asparagine glycan is linked to N201. (1,3-beta-D-glucosyl)n contacts are provided by D212 and R217. Disulfide bonds link C226–C369 and C254–C286. N269 is a glycosylation site (N-linked (GlcNAc...) asparagine). The Nucleophile role is filled by E283. Position 315 (Y315) interacts with (1,3-beta-D-glucosyl)n. 4 N-linked (GlcNAc...) asparagine glycosylation sites follow: N350, N385, N404, and N422. The disordered stretch occupies residues 461–498 (TSQSSSRSLTSSTSPSSSTGSSSSTGSSSASSSSKSKG). G498 is lipidated: GPI-anchor amidated glycine. The propeptide at 499 to 524 (VGNIVNVSFSQSGYLALFAGLISALL) is removed in mature form.

Belongs to the glycosyl hydrolase 72 family. In terms of processing, the GPI-anchor is attached to the protein in the endoplasmic reticulum and serves to target the protein to the cell surface. There, the glucosamine-inositol phospholipid moiety is cleaved off and the GPI-modified mannoprotein is covalently attached via its lipidless GPI glycan remnant to the 1,6-beta-glucan of the outer cell wall layer. N-glycosylated.

Its subcellular location is the secreted. The protein resides in the cell wall. It is found in the membrane. Splits internally a 1,3-beta-glucan molecule and transfers the newly generated reducing end (the donor) to the non-reducing end of another 1,3-beta-glucan molecule (the acceptor) forming a 1,3-beta linkage, resulting in the elongation of 1,3-beta-glucan chains in the cell wall. Involved in cell wall biosynthesis and morphogenesis. The protein is Probable 1,3-beta-glucanosyltransferase GAS3 (GAS3) of Saccharomyces cerevisiae (strain ATCC 204508 / S288c) (Baker's yeast).